The chain runs to 272 residues: Glutamate racemase (272 aa).

Substrate contacts are provided by residues 16–17 (DS) and 48–49 (YG). The Proton donor/acceptor role is filled by Cys-79. 80–81 (NT) serves as a coordination point for substrate. The active-site Proton donor/acceptor is the Cys-191. Residue 192–193 (TH) participates in substrate binding.

The protein belongs to the aspartate/glutamate racemases family.

The enzyme catalyses L-glutamate = D-glutamate. It functions in the pathway cell wall biogenesis; peptidoglycan biosynthesis. Provides the (R)-glutamate required for cell wall biosynthesis. The chain is Glutamate racemase from Chlorobaculum tepidum (strain ATCC 49652 / DSM 12025 / NBRC 103806 / TLS) (Chlorobium tepidum).